The sequence spans 358 residues: DnaJ homolog subfamily B member 11 (358 aa).

Residues 1–22 form the signal peptide; the sequence is MAPQNLSTFCLLLLYLIGAVIA. The 66-residue stretch at 25 to 90 folds into the J domain; that stretch reads DFYKILGVPR…EKRKQYDTYG (66 aa). Position 188 is a phosphothreonine (Thr-188). An N-linked (GlcNAc...) asparagine glycan is attached at Asn-261.

As to quaternary structure, part of a large chaperone multiprotein complex comprising DNAJB11, HSP90B1, HSPA5, HYOU, PDIA2, PDIA4, PDIA6, PPIB, SDF2L1, UGGT1 and very small amounts of ERP29, but not, or at very low levels, CALR nor CANX. Binds to denatured substrates in an ATP-independent manner. Interacts via the J domain with HSPA5 in an ATP-dependent manner. Contains high-mannose Endo H-sensitive carbohydrates. In terms of processing, cys-169, Cys-171, Cys-193 and Cys-196 form intramolecular disulfide bonds. The preferential partner for each Cys is not known.

Its subcellular location is the endoplasmic reticulum lumen. In terms of biological role, as a co-chaperone for HSPA5 it is required for proper folding, trafficking or degradation of proteins. Binds directly to both unfolded proteins that are substrates for ERAD and nascent unfolded peptide chains, but dissociates from the HSPA5-unfolded protein complex before folding is completed. May help recruiting HSPA5 and other chaperones to the substrate. Stimulates HSPA5 ATPase activity. It is necessary for maturation and correct trafficking of PKD1. This Rattus norvegicus (Rat) protein is DnaJ homolog subfamily B member 11 (Dnajb11).